Reading from the N-terminus, the 74-residue chain is UPF0435 protein GWCH70_0415 (74 aa).

The protein belongs to the UPF0435 family.

The sequence is that of UPF0435 protein GWCH70_0415 from Geobacillus sp. (strain WCH70).